Reading from the N-terminus, the 1134-residue chain is Centrosomal protein of 131 kDa (1134 aa).

Disordered regions lie at residues 111–131, 168–208, 286–306, 425–455, and 492–528; these read NSSESDYSLHKRTPDSSEEGE, DLPG…PLTL, ESSKQVEPTSPTPTLPKAPSS, VGKKKENVKPASADPIARSSKSKVTKSTINP, and DQKQYDGKHKPGLEDLDEAQDNDTASQLSLKSNEDSR. The segment covering 180–196 has biased composition (basic and acidic residues); sequence MHADLDSSDCDNDKQEV. Residues 494-504 are compositionally biased toward basic and acidic residues; sequence KQYDGKHKPGL. Polar residues predominate over residues 513-522; that stretch reads NDTASQLSLK. Residues 732–1131 are a coiled coil; the sequence is LESQNQAWEH…AVIRQQRKDY (400 aa).

The protein belongs to the CEP131 family. As to expression, expressed in chordotonal (Ch) neuronal precursors. Expressed in ciliated cells, like sensory neurons and spermatids.

The protein resides in the cytoplasm. It localises to the cytoskeleton. The protein localises to the microtubule organizing center. It is found in the centrosome. Its subcellular location is the cilium basal body. The protein resides in the centriole. Its function is as follows. Cilium-specific protein with a role in cilium/flagellum formation. May be involved in transport of components into the growing cilium. In germ cells and sensory neurons, plays a role with Cby in the building of the transition zone necessary for the formation of the ciliary cap and for the correct elongation of the axoneme. The polypeptide is Centrosomal protein of 131 kDa (Drosophila melanogaster (Fruit fly)).